The following is a 2370-amino-acid chain: Genome polyprotein (2370 aa).

G112 carries N-myristoyl glycine; by host lipidation. Disordered regions lie at residues 140-173 (VGDM…GNVV) and 704-736 (GADG…FDYP). Residues 154 to 171 (GSNKGGSSTSPKSTSNGN) are compositionally biased toward low complexity. Residues 713 to 725 (APTSDLSDGNPTT) are compositionally biased toward polar residues. Positions 1358-1522 (YSTALSAISL…AAFSAAAALK (165 aa)) constitute an SF3 helicase domain. 1384-1391 (GPPGTGKS) lines the ATP pocket. G1597 carries N-myristoyl glycine; by host lipidation. Residues 1646-1666 (IFAASSFLSLIAATLTIVRCL) form a helical membrane-spanning segment. A disordered region spans residues 1674–1696 (GAYSGTPVPKPRKKDLPKQPVYS). Residue Y1676 is modified to O-(5'-phospho-RNA)-tyrosine. A Peptidase C3 domain is found at 1697-1886 (GPVRRQGFDP…FSARLTPERV (190 aa)). Active-site for protease 3C activity residues include H1745, E1776, and C1849. Residues 2007–2016 (SPGYPWTTQG) are compositionally biased toward polar residues. The segment at 2007–2026 (SPGYPWTTQGRSRRSLFDED) is disordered. Residues 2122 to 2239 (SNVWSIDYSC…GSNQDFHPRE (118 aa)) enclose the RdRp catalytic domain. Residues D2128 and D2225 each act as for RdRp activity in the active site.

Interacts with capsid protein VP1. Interacts with capsid protein VP3. As to quaternary structure, interacts with capsid protein VP0. Interacts with capsid protein VP3. In terms of assembly, interacts with capsid protein VP0. Interacts with capsid protein VP1. Homodimer. Interacts with protein 2B. Interacts with protein 2C. As to quaternary structure, homodimer. Interacts with host ABCD3. Interacts with protein 2A. Interacts with host ACBD3. In terms of assembly, homodimer. Interacts with host ABCD3. Interacts with protein 2A. Interacts with protein 3A. Interacts with protein 3C. Interacts with host ACBD3. Homodimer. Interacts with host ABCD3 (via GOLD domain) and PI4KB; these interactions allow the formation of a viral protein/ACBD3/PI4KB complex in order to synthesize PI4P at the viral RNA replication sites. Interacts with protein 2C. Interacts with protein 3C. Protein 3C: Interacts with protein 2A. Protein 3C: Interacts with protein 2C. Post-translationally, specific enzymatic cleavages by the viral protease in vivo yield a variety of precursors and mature proteins. The leader protein-VP0 junction is cleaved by 3C proteinase. The VP1/2A junction is cleaved by the protein 3CD in association with protein 2A. Uridylylated by the polymerase and is covalently linked to the 5'-end of genomic RNA. This uridylylated form acts as a nucleotide-peptide primer for the polymerase.

It is found in the virion. The protein resides in the host cytoplasm. Its subcellular location is the host cytoplasmic vesicle membrane. The protein localises to the host Golgi apparatus membrane. The enzyme catalyses RNA(n) + a ribonucleoside 5'-triphosphate = RNA(n+1) + diphosphate. The catalysed reaction is Selective cleavage of Gln-|-Gly bond in the poliovirus polyprotein. In other picornavirus reactions Glu may be substituted for Gln, and Ser or Thr for Gly.. It carries out the reaction ATP + H2O = ADP + phosphate + H(+). Functionally, required for viral RNA replication and viral RNA encapsidation. Does not have any proteolytic activity. Forms an icosahedral capsid of pseudo T=3 symmetry with capsid proteins VP0 and VP3. Together they form an icosahedral capsid composed of 60 copies of each VP0, VP1, and VP3. All the three latter proteins contain a beta-sheet structure called beta-barrel jelly roll. Its function is as follows. Forms an icosahedral capsid of pseudo T=3 symmetry with capsid proteins VP1 and VP3. Together they form an icosahedral capsid composed of 60 copies of each VP0, VP1, and VP3. All the three latter proteins contain a beta-sheet structure called beta-barrel jelly roll. In terms of biological role, forms an icosahedral capsid of pseudo T=3 symmetry with capsid proteins VP0 and VP1. Together they form an icosahedral capsid composed of 60 copies of each VP0, VP1, and VP3. All the three latter proteins contain a beta-sheet structure called beta-barrel jelly roll. Functionally, required for viral RNA replication. Does not have any proteolytic activity. Affects membrane integrity and causes an increase in membrane permeability. Its function is as follows. Induces and associates with structural rearrangements of intracellular membranes. Displays RNA-binding, nucleotide binding and NTPase activities. May play a role in virion morphogenesis and viral RNA encapsidation by interacting with the capsid protein VP3. In terms of biological role, serves as membrane anchor via its hydrophobic domain. Plays an essential role in viral RNA replication by recruiting PI4KB at the viral replication sites, thereby allowing the formation of rearranged membranous structures where viral replication takes place. Functionally, forms a primer, VPg-pU, which is utilized by the polymerase for the initiation of RNA chains. Cysteine protease that generates mature viral proteins from the precursor polyprotein. In addition to its proteolytic activity, it binds to viral RNA, and thus influences viral genome replication. RNA and substrate cooperatively bind to the protease. Its function is as follows. Replicates the genomic and antigenomic RNAs by recognizing replications specific signals. Performs VPg uridylylation. The sequence is that of Genome polyprotein from Homo sapiens (Human).